Consider the following 204-residue polypeptide: Thymidylate kinase (204 aa).

11-18 (GLDKSGKT) serves as a coordination point for ATP.

Belongs to the thymidylate kinase family.

The catalysed reaction is dTMP + ATP = dTDP + ADP. It participates in pyrimidine metabolism; dTTP biosynthesis. The chain is Thymidylate kinase (TMK) from Rabbitpox virus (strain Utrecht) (RPV).